A 432-amino-acid chain; its full sequence is N-acylneuraminate cytidylyltransferase (432 aa).

The residue at position 1 (M1) is an N-acetylmethionine. The disordered stretch occupies residues 1 to 38; sequence MDALEKGAATSGPAPRGRPSRGRPPKLQRSRGAGRGLE. Positions 15-31 match the BC1 motif motif; it reads PRGRPSRGRPPKLQRSR. A compositionally biased stretch (basic residues) spans 18–29; sequence RPSRGRPPKLQR. R35 and R50 each carry omega-N-methylarginine. Residues R50, N60, R109, S118, S120, and Q141 each contribute to the substrate site. Positions 198–204 match the BC2 motif motif; the sequence is KRPRRQD. R199 is an active-site residue. The BC3 motif signature appears at 267 to 274; that stretch reads KEKLKEIK.

This sequence belongs to the CMP-NeuNAc synthase family. Homotetramer; the active enzyme is formed by a dimer of dimers. In terms of tissue distribution, liver.

Its subcellular location is the nucleus. The enzyme catalyses an N-acylneuraminate + CTP = a CMP-N-acyl-beta-neuraminate + diphosphate. The protein operates within amino-sugar metabolism; N-acetylneuraminate metabolism. Catalyzes the activation of N-acetylneuraminic acid (NeuNAc) to cytidine 5'-monophosphate N-acetylneuraminic acid (CMP-NeuNAc), a substrate required for the addition of sialic acid. Has some activity toward NeuNAc, N-glycolylneuraminic acid (Neu5Gc) or 2-keto-3-deoxy-D-glycero-D-galacto-nononic acid (KDN). This chain is N-acylneuraminate cytidylyltransferase (Cmas), found in Rattus norvegicus (Rat).